Reading from the N-terminus, the 322-residue chain is CXXC-type zinc finger protein 5 (322 aa).

Gly residues predominate over residues 1 to 10 (MSSLGGGSQD). Positions 1-100 (MSSLGGGSQD…SGGGSMMGGE (100 aa)) are disordered. Composition is skewed to low complexity over residues 11–20 (AGGSSSSSTN) and 28–52 (SGPK…VADD). T53 carries the phosphothreonine modification. Positions 87–97 (SSGGSGGGSMM) are enriched in gly residues. A CXXC-type zinc finger spans residues 256–297 (GKKKRKRCGMCAPCRRRINCEQCSSCRNRKTGHQICKFRKCE). Residues 257–262 (KKKRKR) carry the Nuclear localization signal motif. Zn(2+) contacts are provided by C263, C266, C269, C275, C278, C281, C291, and C296.

As to quaternary structure, interacts with DVL1. Interacts with RBPJ.

The protein resides in the nucleus. The protein localises to the cytoplasm. Its function is as follows. May indirectly participate in activation of the NF-kappa-B and MAPK pathways. Acts as a mediator of BMP4-mediated modulation of canonical Wnt signaling activity in neural stem cells. Required for DNA damage-induced ATM phosphorylation, p53 activation and cell cycle arrest. Involved in myelopoiesis. Binds to the oxygen responsive element of COX4I2 and represses its transcription under hypoxia conditions (4% oxygen), as well as normoxia conditions (20% oxygen). May repress COX4I2 transactivation induced by CHCHD2 and RBPJ. Binds preferentially to DNA containing cytidine-phosphate-guanosine (CpG) dinucleotides over CpH (H=A, T, and C), hemimethylated-CpG and hemimethylated-hydroxymethyl-CpG. The sequence is that of CXXC-type zinc finger protein 5 (CXXC5) from Pongo abelii (Sumatran orangutan).